We begin with the raw amino-acid sequence, 122 residues long: MTQPTIEDTLLRLAAVIDSRKGGDPEQSYVSRLFHKGDDAVLKKIGEEATEVVLAAKDVRQGGAPSALVGEVADLWFHCLVALSHFDLSPADVIAELERREGMSGIEEKALRKRREREENGG.

The protein belongs to the PRA-PH family.

The protein localises to the cytoplasm. It carries out the reaction 1-(5-phospho-beta-D-ribosyl)-ATP + H2O = 1-(5-phospho-beta-D-ribosyl)-5'-AMP + diphosphate + H(+). It participates in amino-acid biosynthesis; L-histidine biosynthesis; L-histidine from 5-phospho-alpha-D-ribose 1-diphosphate: step 2/9. The chain is Phosphoribosyl-ATP pyrophosphatase from Burkholderia thailandensis (strain ATCC 700388 / DSM 13276 / CCUG 48851 / CIP 106301 / E264).